The following is a 580-amino-acid chain: N(6)-adenosine-methyltransferase catalytic subunit METTL3 (580 aa).

The interval 1 to 70 (MSDTWSSIQA…PKPSTTSVAP (70 aa)) is disordered. Serine 2 carries the post-translational modification N-acetylserine; alternate. Serine 2 bears the Phosphoserine; alternate mark. A compositionally biased stretch (basic and acidic residues) spans 28–37 (QDSGHLDLRN). Phosphoserine occurs at positions 43, 48, and 50. The span at 55 to 67 (APTSSGPKPSTTS) shows a compositional bias: low complexity. Glycyl lysine isopeptide (Lys-Gly) (interchain with G-Cter in SUMO1) cross-links involve residues lysine 177, lysine 211, lysine 212, and lysine 215. The tract at residues 198–217 (LASSASEPAKEPAKKSRKHA) is disordered. Residues 210 to 215 (AKKSRK) carry the Nuclear localization signal motif. Serine 219, serine 243, and serine 350 each carry phosphoserine. Residues 377 to 378 (DI) and aspartate 395 each bind S-adenosyl-L-methionine. The interval 396–410 (PPWDIHMELPYGTLT) is gate loop 1. Interaction with METTL14 regions lie at residues 450-454 (ERVDE) and 464-480 (QRII…NHGK). Residues 462–479 (QLQRIIRTGRTGHWLNHG) are interphase loop. The positively charged region required for RNA-binding stretch occupies residues 465 to 478 (RIIRTGRTGHWLNH). Residues 507-515 (VRSTSHKPD) are gate loop 2. S-adenosyl-L-methionine is bound by residues lysine 513, 536–539 (RPHN), and 549–550 (NQ).

It belongs to the MT-A70-like family. As to quaternary structure, heterodimer; heterodimerizes with METTL14 to form an antiparallel heterodimer that constitutes an active methyltransferase. Component of the WMM complex, a N6-methyltransferase complex composed of a catalytic subcomplex, named MAC, and of an associated subcomplex, named MACOM. The MAC subcomplex is composed of METTL3 and METTL14. The MACOM subcomplex is composed of WTAP, ZC3H13, CBLL1/HAKAI, VIRMA, and, in some cases of RBM15 (RBM15 or RBM15B). Interacts with NCBP1/CBP80. Interacts with EIF4E. Interacts with EIF3B. Sumoylation inhibits the N6-adenosine-methyltransferase activity. Sumoylation does not affect subcellular location or interaction with METTL14. Desumoylated by SENP1. Present in both germ cells and somatic cells during testis development (at protein level).

The protein resides in the nucleus. It localises to the nucleus speckle. It is found in the cytoplasm. The catalysed reaction is an adenosine in mRNA + S-adenosyl-L-methionine = an N(6)-methyladenosine in mRNA + S-adenosyl-L-homocysteine + H(+). Methyltransferase activity is regulated by miRNAs via a sequence pairing mechanism. Methyltransferase activity is inhibited by sumoylation. Functionally, the METTL3-METTL14 heterodimer forms a N6-methyltransferase complex that methylates adenosine residues at the N(6) position of some RNAs and regulates various processes such as the circadian clock, differentiation of embryonic and hematopoietic stem cells, cortical neurogenesis, response to DNA damage, differentiation of T-cells and primary miRNA processing. In the heterodimer formed with METTL14, METTL3 constitutes the catalytic core. N6-methyladenosine (m6A), which takes place at the 5'-[AG]GAC-3' consensus sites of some mRNAs, plays a role in mRNA stability, processing, translation efficiency and editing. M6A acts as a key regulator of mRNA stability: methylation is completed upon the release of mRNA into the nucleoplasm and promotes mRNA destabilization and degradation. In embryonic stem cells (ESCs), m6A methylation of mRNAs encoding key naive pluripotency-promoting transcripts results in transcript destabilization, promoting differentiation of ESCs. M6A regulates the length of the circadian clock: acts as an early pace-setter in the circadian loop by putting mRNA production on a fast-track for facilitating nuclear processing, thereby providing an early point of control in setting the dynamics of the feedback loop. M6A also regulates circadian regulation of hepatic lipid metabolism. M6A regulates spermatogonial differentiation and meiosis and is essential for male fertility and spermatogenesis. Also required for oogenesis. Involved in the response to DNA damage: in response to ultraviolet irradiation, METTL3 rapidly catalyzes the formation of m6A on poly(A) transcripts at DNA damage sites, leading to the recruitment of POLK to DNA damage sites. M6A is also required for T-cell homeostasis and differentiation: m6A methylation of transcripts of SOCS family members (SOCS1, SOCS3 and CISH) in naive T-cells promotes mRNA destabilization and degradation, promoting T-cell differentiation. Inhibits the type I interferon response by mediating m6A methylation of IFNB. M6A also regulates cortical neurogenesis: m6A methylation of transcripts related to transcription factors, neural stem cells, the cell cycle and neuronal differentiation during brain development promotes their destabilization and decay, promoting differentiation of radial glial cells. M6A also takes place in other RNA molecules, such as primary miRNA (pri-miRNAs). Mediates m6A methylation of Xist RNA, thereby participating in random X inactivation: m6A methylation of Xist leads to target YTHDC1 reader on Xist and promote transcription repression activity of Xist. METTL3 mediates methylation of pri-miRNAs, marking them for recognition and processing by DGCR8. Acts as a positive regulator of mRNA translation independently of the methyltransferase activity: promotes translation by interacting with the translation initiation machinery in the cytoplasm. The protein is N(6)-adenosine-methyltransferase catalytic subunit METTL3 of Mus musculus (Mouse).